The sequence spans 365 residues: RISC-loading complex subunit TARBP2 (365 aa).

3 sufficient for interaction with PRKRA regions span residues 22-105 (MLAA…EPAL), 151-233 (SPQQ…DARD), and 286-365 (LGAL…AGSK). The DRBM 1 domain occupies 30 to 97 (TPISLLQEYG…AEVALKHLKG (68 aa)). Phosphoserine is present on S151. 2 DRBM domains span residues 158-226 (NPVG…RVHT) and 292-360 (ACCS…YLRI). The sufficient for interaction with DICER1 stretch occupies residues 227–365 (VPLDARDGNE…QYLRIMAGSK (139 aa)).

The protein belongs to the TARBP2 family. Self-associates. Component of the RISC loading complex (RLC), or micro-RNA (miRNA) loading complex (miRLC), which is composed of DICER1, AGO2 and TARBP2. Note that the trimeric RLC/miRLC is also referred to as RISC. Interacts with EIF2AK2/PKR and inhibits its protein kinase activity. Interacts with DHX9. Interacts with DICER1 and PRKRA. Interacts with DICER1, AGO2, MOV10, EIF6 and RPL7A (60S ribosome subunit); they form a large RNA-induced silencing complex (RISC). Interacts with IRF7; this interaction prevents IRF7 phosphorylation and activation.

Its subcellular location is the cytoplasm. It is found in the perinuclear region. It localises to the nucleus. In terms of biological role, required for formation of the RNA induced silencing complex (RISC). Component of the RISC loading complex (RLC), also known as the micro-RNA (miRNA) loading complex (miRLC), which is composed of DICER1, AGO2 and TARBP2. Within the RLC/miRLC, DICER1 and TARBP2 are required to process precursor miRNAs (pre-miRNAs) to mature miRNAs and then load them onto AGO2. AGO2 bound to the mature miRNA constitutes the minimal RISC and may subsequently dissociate from DICER1 and TARBP2. May also play a role in the production of short interfering RNAs (siRNAs) from double-stranded RNA (dsRNA) by DICER1. Binds in vitro to the PRM1 3'-UTR. Seems to act as a repressor of translation. For some pre-miRNA substrates, may also alter the choice of cleavage site by DICER1. Negatively regulates IRF7-mediated IFN-beta signaling triggered by viral infection by inhibiting the phosphorylation of IRF7 and promoting its 'Lys'-48-linked ubiquitination and degradation. The chain is RISC-loading complex subunit TARBP2 (Tarbp2) from Mus musculus (Mouse).